Here is a 517-residue protein sequence, read N- to C-terminus: Diacylglycerol O-acyltransferase 1C (517 aa).

The interval 1-82 (MAISDVPAAA…NVGAAANDAG (82 aa)) is disordered. The segment covering 8-17 (AAAGTTATTT) has biased composition (low complexity). The segment covering 53–64 (ITDDDNIKDHKP) has biased composition (basic and acidic residues). The segment covering 71–81 (DDNVGAAANDA) has biased composition (low complexity). The next 7 helical transmembrane spans lie at 121 to 141 (HAGLFNLCIVVLVAVNSRLII), 165 to 185 (WPLFMCCLSLAIFPLAAFVVE), 197 to 217 (VVVLLHLIISTVELCYPVLVI), 222 to 242 (SAFVSGVTLMLLTCIVWLKLV), 272 to 292 (YPYTVTFRSLAYFMVAPTLCY), 305 to 325 (GWVFRQLVKLIIFTGVMGFII), and 361 to 381 (VWLCMFYCFFHLWLNILAELV). The short motif at 388-394 (FYKDWWN) is the FYXDWWN motif element. A run of 3 helical transmembrane segments spans residues 429–449 (GAASLIAFLVSAVFHELCIAV), 451–471 (CHMFKLWAFIGIMFQVPLVLI), and 484–504 (VGNMIFWFIFCILGQPMSVLL). His-443 is a catalytic residue.

It belongs to the membrane-bound acyltransferase family. Sterol o-acyltransferase subfamily.

The protein localises to the endoplasmic reticulum membrane. The enzyme catalyses an acyl-CoA + a 1,2-diacyl-sn-glycerol = a triacyl-sn-glycerol + CoA. The protein operates within glycerolipid metabolism; triacylglycerol biosynthesis. Involved in triacylglycerol (TAG) synthesis. Catalyzes the acylation of the sn-3 hydroxy group of sn-1,2-diacylglycerol using acyl-CoA. This is Diacylglycerol O-acyltransferase 1C from Glycine max (Soybean).